The chain runs to 555 residues: B3 domain-containing protein REM10 (555 aa).

DNA-binding regions (TF-B3) lie at residues 11 to 103 (NPQF…LGPS), 150 to 247 (CFVA…FPMT), 276 to 372 (SFVA…LPLN), and 460 to 554 (SQNR…FCSK).

The protein localises to the nucleus. The chain is B3 domain-containing protein REM10 (REM10) from Arabidopsis thaliana (Mouse-ear cress).